The chain runs to 586 residues: Phosphomethylpyrimidine synthase (586 aa).

The tract at residues 1–58 is disordered; it reads MKQSVSAEQIELKSSLPGSKKVYVDGPREGMKVPMREIEQSDTNGVPNPPIRVYDTSG. Positions 22–39 are enriched in basic and acidic residues; it reads VYVDGPREGMKVPMREIE. Substrate-binding positions include Asn-193, Met-222, Tyr-251, His-287, 307 to 309, 348 to 351, and Glu-387; these read SRG and DGLR. His-391 lines the Zn(2+) pocket. Tyr-414 contacts substrate. Residue His-455 coordinates Zn(2+). [4Fe-4S] cluster-binding residues include Cys-535, Cys-538, and Cys-543.

Belongs to the ThiC family. [4Fe-4S] cluster serves as cofactor.

The catalysed reaction is 5-amino-1-(5-phospho-beta-D-ribosyl)imidazole + S-adenosyl-L-methionine = 4-amino-2-methyl-5-(phosphooxymethyl)pyrimidine + CO + 5'-deoxyadenosine + formate + L-methionine + 3 H(+). The protein operates within cofactor biosynthesis; thiamine diphosphate biosynthesis. Its function is as follows. Catalyzes the synthesis of the hydroxymethylpyrimidine phosphate (HMP-P) moiety of thiamine from aminoimidazole ribotide (AIR) in a radical S-adenosyl-L-methionine (SAM)-dependent reaction. The sequence is that of Phosphomethylpyrimidine synthase from Bacillus thuringiensis (strain Al Hakam).